Consider the following 570-residue polypeptide: Urease subunit alpha (570 aa).

A Urease domain is found at glycine 135–leucine 570. Histidine 140, histidine 142, and lysine 219 together coordinate Ni(2+). The residue at position 219 (lysine 219) is an N6-carboxylysine. Histidine 221 serves as a coordination point for substrate. Histidine 248 and histidine 274 together coordinate Ni(2+). Residue histidine 322 is the Proton donor of the active site. Residue aspartate 362 coordinates Ni(2+).

It belongs to the metallo-dependent hydrolases superfamily. Urease alpha subunit family. Heterotrimer of UreA (gamma), UreB (beta) and UreC (alpha) subunits. Three heterotrimers associate to form the active enzyme. Requires Ni cation as cofactor. Post-translationally, carboxylation allows a single lysine to coordinate two nickel ions.

It is found in the cytoplasm. It carries out the reaction urea + 2 H2O + H(+) = hydrogencarbonate + 2 NH4(+). It functions in the pathway nitrogen metabolism; urea degradation; CO(2) and NH(3) from urea (urease route): step 1/1. The chain is Urease subunit alpha from Haloquadratum walsbyi (strain DSM 16790 / HBSQ001).